Consider the following 334-residue polypeptide: MLFNLKNRHLLSLVHHTPQEIQFLLQLAKELKQAKYTGTEQPRLKGKNIALIFEKTSTRTRCSFEVAAYDQGANVTYIDPNSSQIGHKESMKDTARVLGRMYDAIEYRGFKQAVVNELAEYAGVPVFNGLTDEFHPTQMLADVLTMMEHSDKPLSDIIYVYIGDARNNMGNSLLLIGAKLGMDVRICAPKALQPEAELVAMCQEFAQQTGARITITEDVELAVKGVDFVHTDVWVSMGEPLESWGERINLLLPYQVTPALMQRSGNPKVKFMHCLPAFHNCETEVGKKIAEKYPHLANGIEVTEEVFESPMNIAFDQAENRMHTIKAVMVASLA.

Carbamoyl phosphate contacts are provided by residues 57–60 (STRT), Gln84, Arg108, and 135–138 (HPTQ). L-ornithine is bound by residues Asn168, Asp232, and 236–237 (SM). Residues 274-275 (CL) and Arg321 each bind carbamoyl phosphate.

It belongs to the aspartate/ornithine carbamoyltransferase superfamily. OTCase family.

The protein localises to the cytoplasm. The enzyme catalyses carbamoyl phosphate + L-ornithine = L-citrulline + phosphate + H(+). It participates in amino-acid degradation; L-arginine degradation via ADI pathway; carbamoyl phosphate from L-arginine: step 2/2. In terms of biological role, reversibly catalyzes the transfer of the carbamoyl group from carbamoyl phosphate (CP) to the N(epsilon) atom of ornithine (ORN) to produce L-citrulline. In Avibacterium paragallinarum (Haemophilus gallinarum), this protein is Ornithine carbamoyltransferase, catabolic (arcB).